The primary structure comprises 283 residues: 5'-nucleotidase SurE (283 aa).

Asp14, Asp15, Ser47, and Asn105 together coordinate a divalent metal cation.

Belongs to the SurE nucleotidase family. Requires a divalent metal cation as cofactor.

Its subcellular location is the cytoplasm. It catalyses the reaction a ribonucleoside 5'-phosphate + H2O = a ribonucleoside + phosphate. Its function is as follows. Nucleotidase that shows phosphatase activity on nucleoside 5'-monophosphates. The protein is 5'-nucleotidase SurE of Chlamydia trachomatis serovar D (strain ATCC VR-885 / DSM 19411 / UW-3/Cx).